The chain runs to 521 residues: Cytochrome P450 1A1 (521 aa).

Substrate is bound at residue F229. Residue C463 coordinates heme.

Belongs to the cytochrome P450 family. Requires heme as cofactor.

Its subcellular location is the endoplasmic reticulum membrane. The protein localises to the microsome membrane. The catalysed reaction is an organic molecule + reduced [NADPH--hemoprotein reductase] + O2 = an alcohol + oxidized [NADPH--hemoprotein reductase] + H2O + H(+). Its function is as follows. Cytochromes P450 are a group of heme-thiolate monooxygenases. They oxidize a variety of structurally unrelated compounds, including steroids, fatty acids, and xenobiotics. The protein is Cytochrome P450 1A1 (cyp1a1) of Chaetodon capistratus (Four-eye butterflyfish).